We begin with the raw amino-acid sequence, 395 residues long: Zinc finger protein 385D (395 aa).

Matrin-type zinc fingers lie at residues 80-110, 204-234, and 267-297; these read ISCNICQLRFNSDSQAAAHYKGTKHAKKLKA, LYCSLCKVAVNSASQLEAHNSGTKHKTMLEA, and FHCEICDVHVNSETQLKQHISSRRHKDRASG. Positions 282 to 308 are disordered; the sequence is LKQHISSRRHKDRASGKPPKPKYSPYN.

The protein localises to the nucleus. The polypeptide is Zinc finger protein 385D (Znf385d) (Rattus norvegicus (Rat)).